A 688-amino-acid polypeptide reads, in one-letter code: Polyribonucleotide nucleotidyltransferase (688 aa).

Mg(2+) contacts are provided by Asp-484 and Asp-490. The 60-residue stretch at 550–609 (PTTEIFNVAPDKIVEIIGQGGRVIKEIVEKFEVKIDLNKPSGEVKIMGNKERVLKTKEFI) folds into the KH domain. The S1 motif domain occupies 626–688 (DEVLEAQVKR…NKGKIALDLA (63 aa)).

It belongs to the polyribonucleotide nucleotidyltransferase family. The cofactor is Mg(2+).

Its subcellular location is the cytoplasm. The enzyme catalyses RNA(n+1) + phosphate = RNA(n) + a ribonucleoside 5'-diphosphate. In terms of biological role, involved in mRNA degradation. Catalyzes the phosphorolysis of single-stranded polyribonucleotides processively in the 3'- to 5'-direction. In Helicobacter pylori (strain HPAG1), this protein is Polyribonucleotide nucleotidyltransferase.